The primary structure comprises 189 residues: MSSAQAEDEQDYETPSCYELQKHFTHGGVAYTHVNEVWPGVYIGNEETARDRYKLQTLGITHILNAAEGEWNSVDTGAEYYKDMQIHYYGVTAEDTPTFNISQYFYSAAEYIQQTLSDPHNKLLLHCVMGRSRSATLFLAFLMLQQRMSLLQAVEQLAHRRHICPNWGFLKQLRELDTHLQEERRRTHT.

The 150-residue stretch at 33–182 (HVNEVWPGVY…LRELDTHLQE (150 aa)) folds into the Tyrosine-protein phosphatase domain. 126-133 (HCVMGRSR) provides a ligand contact to substrate. Cysteine 127 serves as the catalytic Phosphocysteine intermediate.

Belongs to the protein-tyrosine phosphatase family. Non-receptor class dual specificity subfamily.

The protein localises to the cytoplasm. It is found in the nucleus. The catalysed reaction is O-phospho-L-tyrosyl-[protein] + H2O = L-tyrosyl-[protein] + phosphate. It catalyses the reaction O-phospho-L-seryl-[protein] + H2O = L-seryl-[protein] + phosphate. It carries out the reaction O-phospho-L-threonyl-[protein] + H2O = L-threonyl-[protein] + phosphate. Functionally, dual specificity phosphatase able to dephosphorylate phosphotyrosine, phosphoserine and phosphothreonine residues within the same substrate, with a preference for phosphotyrosine as a substrate. Involved in the modulation of AMPK and MAPK1/2 signaling pathways. The polypeptide is Dual specificity phosphatase 29 (dusp29) (Danio rerio (Zebrafish)).